We begin with the raw amino-acid sequence, 1002 residues long: Chitin synthase II (1002 aa).

2 disordered regions span residues 1–165 (MDRP…GRTS) and 178–209 (LDGSDDVFGPETDLSDSRPLPTHRDSFMSGSQ). The span at 63 to 78 (SYQPSVVSSHSRSASV) shows a compositional bias: low complexity. N-linked (GlcNAc...) asparagine glycosylation is present at Asn123. Asn336 carries an N-linked (GlcNAc...) asparagine glycan. 8 helical membrane-spanning segments follow: residues 627–647 (WLNGAFFAAVYSLVQFRQILA), 669–689 (LLFTYFSLANFYLTFYFVAGG), 704–724 (SVIFTILRYTCVLLIATQFIL), 740–760 (SMIIYGVIMTYTSFACIYIVV), 780–800 (LIVSMASTIGLYFVMSFLYLE), 808–828 (SLQYFLLLPSYICTLQVYAFC), 906–926 (YMVVTWMIANGILAMAVSEIY), and 940–960 (ILWAVASLAIFRALGSTTFAI).

Belongs to the chitin synthase family. Class II subfamily. As to expression, expressed in hyphal bodies.

It is found in the cell membrane. The catalysed reaction is [(1-&gt;4)-N-acetyl-beta-D-glucosaminyl](n) + UDP-N-acetyl-alpha-D-glucosamine = [(1-&gt;4)-N-acetyl-beta-D-glucosaminyl](n+1) + UDP + H(+). In terms of biological role, polymerizes chitin, a structural polymer of the cell wall and septum, by transferring the sugar moiety of UDP-GlcNAc to the non-reducing end of the growing chitin polymer. Contributes to the production of conidia and the ability of fungal conidia to germinate. Involved in fungal stress tolerances. This Metarhizium acridum (strain CQMa 102) protein is Chitin synthase II.